Reading from the N-terminus, the 252-residue chain is dITP/XTP pyrophosphatase (252 aa).

A substrate-binding site is contributed by 7 to 12 (THNEGK). D74 serves as the catalytic Proton acceptor. A Mg(2+)-binding site is contributed by D74. Substrate contacts are provided by residues S75 and 193 to 196 (FGYD). The disordered stretch occupies residues 202-229 (DDQPAGRVSTEPDHEGEPLTSAEMTPAE). Substrate contacts are provided by residues K230 and 235–236 (HR).

It belongs to the HAM1 NTPase family. Homodimer. Mg(2+) is required as a cofactor.

It catalyses the reaction XTP + H2O = XMP + diphosphate + H(+). The catalysed reaction is dITP + H2O = dIMP + diphosphate + H(+). The enzyme catalyses ITP + H2O = IMP + diphosphate + H(+). Its function is as follows. Pyrophosphatase that catalyzes the hydrolysis of nucleoside triphosphates to their monophosphate derivatives, with a high preference for the non-canonical purine nucleotides XTP (xanthosine triphosphate), dITP (deoxyinosine triphosphate) and ITP. Seems to function as a house-cleaning enzyme that removes non-canonical purine nucleotides from the nucleotide pool, thus preventing their incorporation into DNA/RNA and avoiding chromosomal lesions. In Bifidobacterium longum (strain DJO10A), this protein is dITP/XTP pyrophosphatase.